The primary structure comprises 412 residues: DNA replication and repair protein RecF (412 aa).

30-37 (GANGAGKT) is a binding site for ATP. A disordered region spans residues 369–412 (LQVRPGGGTAAVTPDPEYARGEATAANGAASAPTGADAASTSRD). Positions 389-412 (GEATAANGAASAPTGADAASTSRD) are enriched in low complexity.

The protein belongs to the RecF family.

The protein localises to the cytoplasm. Its function is as follows. The RecF protein is involved in DNA metabolism; it is required for DNA replication and normal SOS inducibility. RecF binds preferentially to single-stranded, linear DNA. It also seems to bind ATP. The protein is DNA replication and repair protein RecF of Salinibacter ruber (strain DSM 13855 / M31).